The primary structure comprises 319 residues: Lipoyl synthase (319 aa).

The [4Fe-4S] cluster site is built by cysteine 61, cysteine 66, cysteine 72, cysteine 87, cysteine 91, cysteine 94, and serine 300. A Radical SAM core domain is found at 73–289 (WDKKHATFMI…ESVAYSKGFL (217 aa)).

The protein belongs to the radical SAM superfamily. Lipoyl synthase family. Requires [4Fe-4S] cluster as cofactor.

It is found in the cytoplasm. It catalyses the reaction [[Fe-S] cluster scaffold protein carrying a second [4Fe-4S](2+) cluster] + N(6)-octanoyl-L-lysyl-[protein] + 2 oxidized [2Fe-2S]-[ferredoxin] + 2 S-adenosyl-L-methionine + 4 H(+) = [[Fe-S] cluster scaffold protein] + N(6)-[(R)-dihydrolipoyl]-L-lysyl-[protein] + 4 Fe(3+) + 2 hydrogen sulfide + 2 5'-deoxyadenosine + 2 L-methionine + 2 reduced [2Fe-2S]-[ferredoxin]. It participates in protein modification; protein lipoylation via endogenous pathway; protein N(6)-(lipoyl)lysine from octanoyl-[acyl-carrier-protein]: step 2/2. In terms of biological role, catalyzes the radical-mediated insertion of two sulfur atoms into the C-6 and C-8 positions of the octanoyl moiety bound to the lipoyl domains of lipoate-dependent enzymes, thereby converting the octanoylated domains into lipoylated derivatives. The protein is Lipoyl synthase of Rhodopseudomonas palustris (strain BisB18).